A 66-amino-acid polypeptide reads, in one-letter code: Neurotoxin Cex11 (66 aa).

The LCN-type CS-alpha/beta domain occupies 1 to 64; that stretch reads KEGYPVNIYT…SYPYPEKSCG (64 aa). 4 disulfides stabilise this stretch: Cys-12–Cys-63, Cys-16–Cys-39, Cys-25–Cys-44, and Cys-29–Cys-46. Cys-63 carries the post-translational modification Cysteine amide. Residues 64–66 constitute a propeptide that is removed on maturation; that stretch reads GRK.

Belongs to the long (4 C-C) scorpion toxin superfamily. Sodium channel inhibitor family. Beta subfamily. In terms of tissue distribution, expressed by the venom gland.

Its subcellular location is the secreted. Beta toxins bind voltage-independently at site-4 of sodium channels (Nav) and shift the voltage of activation toward more negative potentials thereby affecting sodium channel activation and promoting spontaneous and repetitive firing. The sequence is that of Neurotoxin Cex11 from Centruroides exilicauda (Bark scorpion).